The following is a 286-amino-acid chain: Glycine--tRNA ligase alpha subunit (286 aa).

It belongs to the class-II aminoacyl-tRNA synthetase family. Tetramer of two alpha and two beta subunits.

The protein resides in the cytoplasm. The enzyme catalyses tRNA(Gly) + glycine + ATP = glycyl-tRNA(Gly) + AMP + diphosphate. This Thermotoga petrophila (strain ATCC BAA-488 / DSM 13995 / JCM 10881 / RKU-1) protein is Glycine--tRNA ligase alpha subunit.